The chain runs to 167 residues: Dual specificity protein phosphatase 1B (167 aa).

The 142-residue stretch at aspartate 24–glycine 165 folds into the Tyrosine-protein phosphatase domain. Cysteine 109 acts as the Phosphocysteine intermediate in catalysis.

The protein belongs to the protein-tyrosine phosphatase family. Non-receptor class dual specificity subfamily. As to quaternary structure, associates with MPK3 and MPK6. Interacts with MPK6 is promoted during HR-like responses triggered by fungal elicitors, whereas interaction with MPK3 in repressed. Expressed in flowers, seedlings, roots, leaves, and seeds. Present in stomata and meristematic cells.

The protein localises to the nucleus. It is found in the cytoplasm. The enzyme catalyses O-phospho-L-tyrosyl-[protein] + H2O = L-tyrosyl-[protein] + phosphate. It catalyses the reaction O-phospho-L-seryl-[protein] + H2O = L-seryl-[protein] + phosphate. The catalysed reaction is O-phospho-L-threonyl-[protein] + H2O = L-threonyl-[protein] + phosphate. Its function is as follows. Has a dual specificity toward Ser/Thr and Tyr-containing proteins. Prevents biotic and abiotic stress responses, including ozone, oxidative stress and pathogen attacks; represses MAPK activities during hypersensitive response to limit the spread of the HR response after infection by necrotrophic pathogen such as Botrytis cinerea. May be also involved in ABA and salt responses. Dephosphorylates MPK3 and MPK6. This chain is Dual specificity protein phosphatase 1B (DSPTP1B), found in Arabidopsis thaliana (Mouse-ear cress).